Consider the following 109-residue polypeptide: Small ribosomal subunit protein bS6 (109 aa).

This sequence belongs to the bacterial ribosomal protein bS6 family.

In terms of biological role, binds together with bS18 to 16S ribosomal RNA. The polypeptide is Small ribosomal subunit protein bS6 (Dehalococcoides mccartyi (strain ATCC BAA-2266 / KCTC 15142 / 195) (Dehalococcoides ethenogenes (strain 195))).